A 680-amino-acid chain; its full sequence is UvrABC system protein B (680 aa).

Positions 27–422 (AGALGGVTFQ…GRMAGEHVAE (396 aa)) constitute a Helicase ATP-binding domain. Position 40–47 (40–47 (GATGTGKT)) interacts with ATP. A Beta-hairpin motif is present at residues 93-116 (YYDYYQPEAYIPQTDTYIEKSASI). A Helicase C-terminal domain is found at 443–609 (QVDDLLHEIH…PIVKRLDANS (167 aa)). Residues 641–676 (PELVSQLEIQMRDAAKKLEFEKAAEYRDKIHKLRER) enclose the UVR domain.

Belongs to the UvrB family. In terms of assembly, forms a heterotetramer with UvrA during the search for lesions. Interacts with UvrC in an incision complex.

The protein localises to the cytoplasm. In terms of biological role, the UvrABC repair system catalyzes the recognition and processing of DNA lesions. A damage recognition complex composed of 2 UvrA and 2 UvrB subunits scans DNA for abnormalities. Upon binding of the UvrA(2)B(2) complex to a putative damaged site, the DNA wraps around one UvrB monomer. DNA wrap is dependent on ATP binding by UvrB and probably causes local melting of the DNA helix, facilitating insertion of UvrB beta-hairpin between the DNA strands. Then UvrB probes one DNA strand for the presence of a lesion. If a lesion is found the UvrA subunits dissociate and the UvrB-DNA preincision complex is formed. This complex is subsequently bound by UvrC and the second UvrB is released. If no lesion is found, the DNA wraps around the other UvrB subunit that will check the other stand for damage. The chain is UvrABC system protein B from Gloeobacter violaceus (strain ATCC 29082 / PCC 7421).